Consider the following 772-residue polypeptide: Elongin-A (772 aa).

In terms of domain architecture, TFIIS N-terminal spans 4–79 (ESALQVVEKL…AQWKKLVPVE (76 aa)). Basic and acidic residues-rich tracts occupy residues 79–105 (ERNAEPDEQDFEKSNSRKRPRDALQKE) and 136–156 (LSELERPHKVSHGHERRDERK). Disordered regions lie at residues 79–403 (ERNA…FEQP) and 418–466 (KKKK…EKPA). Ser-196 carries the post-translational modification Phosphoserine. 5 stretches are compositionally biased toward basic and acidic residues: residues 226 to 235 (QERHLGEPHG), 253 to 269 (RPVDAKSDEKASVVSRE), 275 to 308 (LSKEENRRPPSGDNAREKPPSSGVKKEKDREGSS), 321 to 343 (SDNHLKKPKHRDPEKAKLDKSKQ), and 372 to 384 (PEGKVKTNLDRKS). Ser-384 and Ser-387 each carry phosphoserine. Position 394 is a phosphothreonine (Thr-394). At Lys-434 the chain carries N6-acetyllysine. Residues 434–443 (KGLKKNDSKS) show a composition bias toward basic and acidic residues. Phosphoserine is present on Ser-516. Positions 522–681 (EAGFTGRRMN…PPRDVRRRQE (160 aa)) are activation domain. A BC-box region spans residues 550–559 (TLHQQCIRVL). Residues 566–610 (IFEVGGVPYSVLEPVLERCTPDQLYRIEEYNHVLIEETDQLWKVH) enclose the F-box domain. The segment at 674-732 (RDVRRRQEKFGTGGAAVPEKIKIKPAPYPMGSSHASASSISFNPSPEEPAYDGPSTSSA) is disordered. The span at 705–714 (SSHASASSIS) shows a compositional bias: low complexity.

In terms of assembly, heterotrimer of an A (ELOA, ELOA2 or ELOA3P), ELOB and ELOC subunit. Part of a multisubunit ubiquitin ligase complex consisting of elongin BC complex (ELOB and ELOC), elongin A/ELOA, RBX1 and CUL5. Interacts with ERCC6; the interaction is induced by DNA damaging agents or inhibitors of RNA polymerase II elongation. Interacts (via BC-box) with CUL5.

It localises to the nucleus. Its function is as follows. SIII, also known as elongin, is a general transcription elongation factor that increases the RNA polymerase II transcription elongation past template-encoded arresting sites. Subunit A is transcriptionally active and its transcription activity is strongly enhanced by binding to the dimeric complex of the SIII regulatory subunits B and C (elongin BC complex). Functionally, as part of a multisubunit complex composed of elongin BC complex (ELOB and ELOC), elongin A/ELOA, RBX1 and CUL5; polyubiquitinates monoubiquitinated POLR2A. The sequence is that of Elongin-A from Homo sapiens (Human).